A 219-amino-acid chain; its full sequence is Guanylate kinase (219 aa).

Residues 15–194 (GLMFVLSSPS…AFAEVQSILK (180 aa)) form the Guanylate kinase-like domain. 22–29 (SPSGAGKT) is an ATP binding site.

This sequence belongs to the guanylate kinase family.

The protein resides in the cytoplasm. The catalysed reaction is GMP + ATP = GDP + ADP. In terms of biological role, essential for recycling GMP and indirectly, cGMP. The protein is Guanylate kinase of Bradyrhizobium diazoefficiens (strain JCM 10833 / BCRC 13528 / IAM 13628 / NBRC 14792 / USDA 110).